The primary structure comprises 319 residues: Taste receptor type 2 member 30 (319 aa).

A topological domain (extracellular) is located at residue M1. A helical transmembrane segment spans residues I2 to F22. Residues A23–Q46 lie on the Cytoplasmic side of the membrane. A helical transmembrane segment spans residues I47–Y67. The Extracellular segment spans residues A68–N86. The chain crosses the membrane as a helical span at residues V87–L107. At L108–K126 the chain is on the cytoplasmic side. A helical transmembrane segment spans residues S127 to I147. Over N148–T178 the chain is Extracellular. N-linked (GlcNAc...) asparagine glycans are attached at residues N161 and N176. The helical transmembrane segment at L179–I199 threads the bilayer. The Cytoplasmic portion of the chain corresponds to C200–Q229. Residues T230–C250 traverse the membrane as a helical segment. Topologically, residues N251–P259 are extracellular. The helical transmembrane segment at V260–I280 threads the bilayer. Residues L281–G319 lie on the Cytoplasmic side of the membrane.

This sequence belongs to the G-protein coupled receptor T2R family.

The protein resides in the membrane. Functionally, receptor that may play a role in the perception of bitterness and is gustducin-linked. May play a role in sensing the chemical composition of the gastrointestinal content. The activity of this receptor may stimulate alpha gustducin, mediate PLC-beta-2 activation and lead to the gating of TRPM5. The chain is Taste receptor type 2 member 30 (TAS2R30) from Pan paniscus (Pygmy chimpanzee).